The sequence spans 427 residues: Histidinol dehydrogenase (427 aa).

Y125, Q186, and N209 together coordinate NAD(+). Substrate contacts are provided by S234, Q256, and H259. Q256 and H259 together coordinate Zn(2+). Residues E325 and H326 each act as proton acceptor in the active site. Positions 326, 359, 413, and 419 each coordinate substrate. A Zn(2+)-binding site is contributed by D359. H419 contacts Zn(2+).

The protein belongs to the histidinol dehydrogenase family. Zn(2+) serves as cofactor.

The catalysed reaction is L-histidinol + 2 NAD(+) + H2O = L-histidine + 2 NADH + 3 H(+). It participates in amino-acid biosynthesis; L-histidine biosynthesis; L-histidine from 5-phospho-alpha-D-ribose 1-diphosphate: step 9/9. In terms of biological role, catalyzes the sequential NAD-dependent oxidations of L-histidinol to L-histidinaldehyde and then to L-histidine. This Leptospira interrogans serogroup Icterohaemorrhagiae serovar copenhageni (strain Fiocruz L1-130) protein is Histidinol dehydrogenase.